Consider the following 251-residue polypeptide: ATP synthase subunit a, chloroplastic (251 aa).

6 helical membrane-spanning segments follow: residues 3 to 23 (IVLLYYFVNMFISGIFQIANV), 38 to 58 (IHGQVLINSWIVILIIGFLSI), 99 to 119 (VPYIGTMFLFIFVSNWSGALI), 138 to 158 (INTTAGLAILTSLAYFYAGLN), 203 to 223 (LVVAVLVSLVPLIVPVPLIFL), and 224 to 244 (GLFTSGIQALIFATLSGSYIG).

It belongs to the ATPase A chain family. As to quaternary structure, F-type ATPases have 2 components, CF(1) - the catalytic core - and CF(0) - the membrane proton channel. CF(1) has five subunits: alpha(3), beta(3), gamma(1), delta(1), epsilon(1). CF(0) has four main subunits: a, b, b' and c.

The protein localises to the plastid. Its subcellular location is the chloroplast thylakoid membrane. In terms of biological role, key component of the proton channel; it plays a direct role in the translocation of protons across the membrane. This is ATP synthase subunit a, chloroplastic from Euglena gracilis.